A 602-amino-acid polypeptide reads, in one-letter code: UPF0329 protein ECU02_0060 (602 aa).

The segment covering 313–345 has biased composition (basic and acidic residues); that stretch reads EEDERKRAEAESARNREELLRMEEREKGKEKGS. A disordered region spans residues 313 to 407; it reads EEDERKRAEA…SPKEESKGEE (95 aa). The segment covering 346 to 356 has biased composition (basic residues); sequence KGKGRKKRGKK. Basic and acidic residues predominate over residues 357 to 369; the sequence is GAGEAKEESKEED. Residues 370–384 are compositionally biased toward acidic residues; it reads RGGEEEESVEADVPV.

This sequence belongs to the UPF0329 family.

The chain is UPF0329 protein ECU02_0060 from Encephalitozoon cuniculi (strain GB-M1) (Microsporidian parasite).